A 251-amino-acid polypeptide reads, in one-letter code: Ubiquinone/menaquinone biosynthesis C-methyltransferase UbiE (251 aa).

S-adenosyl-L-methionine-binding positions include Thr-74, Asp-95, and 123-124 (NA).

This sequence belongs to the class I-like SAM-binding methyltransferase superfamily. MenG/UbiE family.

The enzyme catalyses a 2-demethylmenaquinol + S-adenosyl-L-methionine = a menaquinol + S-adenosyl-L-homocysteine + H(+). It carries out the reaction a 2-methoxy-6-(all-trans-polyprenyl)benzene-1,4-diol + S-adenosyl-L-methionine = a 5-methoxy-2-methyl-3-(all-trans-polyprenyl)benzene-1,4-diol + S-adenosyl-L-homocysteine + H(+). It participates in quinol/quinone metabolism; menaquinone biosynthesis; menaquinol from 1,4-dihydroxy-2-naphthoate: step 2/2. Its pathway is cofactor biosynthesis; ubiquinone biosynthesis. In terms of biological role, methyltransferase required for the conversion of demethylmenaquinol (DMKH2) to menaquinol (MKH2) and the conversion of 2-polyprenyl-6-methoxy-1,4-benzoquinol (DDMQH2) to 2-polyprenyl-3-methyl-6-methoxy-1,4-benzoquinol (DMQH2). The sequence is that of Ubiquinone/menaquinone biosynthesis C-methyltransferase UbiE from Erwinia tasmaniensis (strain DSM 17950 / CFBP 7177 / CIP 109463 / NCPPB 4357 / Et1/99).